The following is a 300-amino-acid chain: Zinc finger protein RME1 (300 aa).

A compositionally biased stretch (polar residues) spans 80-90; the sequence is QAYDSTSSTEE. The segment at 80 to 100 is disordered; it reads QAYDSTSSTEEGTAPQLRPDE. C2H2-type zinc fingers lie at residues 178-199, 206-234, and 256-281; these read YHCS…HLDE, CKCP…ASQH, and LNCP…AMVH.

The protein localises to the nucleus. Functionally, involved in the control of meiosis. Represses the transcription of the IME1 gene thereby inhibiting cells from entering meiosis. But also activates the CLN2 gene thus promoting mitosis. This chain is Zinc finger protein RME1 (RME1), found in Saccharomyces cerevisiae (strain ATCC 204508 / S288c) (Baker's yeast).